A 418-amino-acid polypeptide reads, in one-letter code: MNTKHVTCRYFLHGVCREGGRCLFSHDLATSKPSTVCRFYQRGQCAYGARCRYDHVKPCNGSVFYPPQEMAPAPLESTPPLLPTQEAAAPVTKSAPQRREKKSVVLRDRDLCGASVEKAHPDPALRPGCAADPPVSELEAKPHSYLEAICTGLDETPIPSAYPDAPQQLCPFAQAGGCHYGESCPYIHGNVCEICGLQVLHPYDQEQRGHHEKLCMANFERDMERAFAFQASEGKVCSICMERVYDKQSPSERRFGILSNCHHTYCLACIRQWRCARQFENPVIKSCPECRVISEFVIPSAYWVEDQSKKFELIEAFKQGMGKKACKYFDQGRGTCPFGGKCLYLHAYPDGTRAEPEKPRKQLGSEGTVRFLNSVRLWDFIEEREQRNLPDAEDEVAELGELFMHLSGVGEEPPAASN.

2 C3H1-type zinc fingers span residues 2-29 (NTKH…HDLA) and 31-58 (SKPS…HVKP). Positions 76–100 (ESTPPLLPTQEAAAPVTKSAPQRRE) are disordered. The C3H1-type 3 zinc-finger motif lies at 164–191 (DAPQQLCPFAQAGGCHYGESCPYIHGNV). Residues 192-221 (CEICGLQVLHPYDQEQRGHHEKLCMANFER) are makorin-type Cys-His. The RING-type zinc-finger motif lies at 237–291 (CSICMERVYDKQSPSERRFGILSNCHHTYCLACIRQWRCARQFENPVIKSCPECR). The segment at 320–349 (GMGKKACKYFDQGRGTCPFGGKCLYLHAYP) adopts a C3H1-type 4 zinc-finger fold.

Its subcellular location is the cytoplasm. It is found in the nucleus. It carries out the reaction S-ubiquitinyl-[E2 ubiquitin-conjugating enzyme]-L-cysteine + [acceptor protein]-L-lysine = [E2 ubiquitin-conjugating enzyme]-L-cysteine + N(6)-ubiquitinyl-[acceptor protein]-L-lysine.. The protein operates within protein modification; protein ubiquitination. Its function is as follows. E3 ubiquitin ligase catalyzing the covalent attachment of ubiquitin moieties onto substrate proteins. Inhibits neurogenesis and axis formation during embryonic development by modulating the phosphatidylinositol 3-kinase (PI3K) pathway. Acts downstream of PI3K and akt1 to up-regulate gsk3b mRNA expression. In Xenopus tropicalis (Western clawed frog), this protein is E3 ubiquitin-protein ligase makorin-2 (mkrn2).